The chain runs to 246 residues: Neuromodulin (246 aa).

Residues 1-246 (MLCCMRRTKQ…EESKADQENA (246 aa)) form a disordered region. Residues Cys-3 and Cys-4 are each lipidated (S-palmitoyl cysteine). Basic and acidic residues predominate over residues 9-33 (KQVEKNEDGDQKIEQDGIKPEDKAH). One can recognise an IQ domain in the interval 32-61 (AHKAATKIQASFRGHITRKKLKGEKKADAP). 2 stretches are compositionally biased toward low complexity: residues 87 to 99 (ASAA…ADSA) and 125 to 157 (SEQP…KAST). Over residues 164–176 (KADEAQDKEEPKQ) the composition is skewed to basic and acidic residues. A compositionally biased stretch (low complexity) spans 177–203 (ADVPAADTTATTTPAAEDATAKATAQP). 2 stretches are compositionally biased toward basic and acidic residues: residues 213–225 (TEEK…ETKP) and 237–246 (EESKADQENA).

This sequence belongs to the neuromodulin family. In terms of assembly, binds calmodulin with a greater affinity in the absence of Ca(2+) than in its presence. In terms of processing, palmitoylated. Palmitoylation is essential for plasma membrane association. As to expression, expressed in neurons.

Its subcellular location is the cell membrane. The protein localises to the cell projection. It is found in the growth cone membrane. It localises to the synapse. The protein resides in the filopodium membrane. Its function is as follows. This protein is associated with nerve growth. It is a major component of the motile 'growth cones' that form the tips of elongating axons. Plays a role in axonal and dendritic filopodia induction. The polypeptide is Neuromodulin (GAP43) (Gallus gallus (Chicken)).